A 211-amino-acid chain; its full sequence is Small ribosomal subunit protein eS1 (211 aa).

A disordered region spans residues 192–211; the sequence is NGLPPYEAVGDRATPELASY.

This sequence belongs to the eukaryotic ribosomal protein eS1 family.

This is Small ribosomal subunit protein eS1 from Methanopyrus kandleri (strain AV19 / DSM 6324 / JCM 9639 / NBRC 100938).